An 825-amino-acid chain; its full sequence is Probable ATP-dependent RNA helicase DDX20 (825 aa).

The tract at residues 27–50 (PVQAVEPTPASPWTQRTAHDIGGP) is disordered. The Q motif motif lies at 63-91 (ADFESLLLSRPVLEGLRAAGFERPSPVQL). ATP-binding positions include Arg-85, Gln-90, 107-114 (AKSGTGKT), and 110-115 (GTGKTC). The region spanning 94-265 (IPLGRCGLDL…TRYMRDPTFV (172 aa)) is the Helicase ATP-binding domain. Ser-188 carries the post-translational modification Phosphoserine. The DEAD box signature appears at 212-215 (DEAD). A Phosphoserine modification is found at Ser-270. In terms of domain architecture, Helicase C-terminal spans 300–449 (HLQELFSKVP…PIPPGLMEEC (150 aa)). 2 stretches are compositionally biased toward polar residues: residues 465-475 (SPTVATQSPKK) and 484-504 (FQSQ…SASA). Disordered regions lie at residues 465-573 (SPTV…PGSL) and 642-753 (QMLV…EPQE). Residues Ser-472, Ser-501, and Ser-506 each carry the phosphoserine modification. Residues 508–518 (RPKHSKPKLPV) show a composition bias toward basic residues. Residues 547-571 (KNSVQTSVEDSSSNSQHQAKDSSPG) show a composition bias toward polar residues. Thr-552 carries the post-translational modification Phosphothreonine. Residues Ser-561, Ser-653, Ser-655, Ser-657, Ser-673, Ser-678, and Ser-679 each carry the phosphoserine modification. Over residues 646–668 (SSSQSGDSESDSDSCSSRTSSQS) the composition is skewed to low complexity. Thr-689 and Thr-706 each carry phosphothreonine. Positions 698 to 711 (EQVQNGNDTPTQVE) are enriched in polar residues. Residues 733–744 (KQSRRNPARRSS) are compositionally biased toward basic residues.

The protein belongs to the DEAD box helicase family. DDX20 subfamily. In terms of assembly, part of the core SMN complex that contains SMN1, GEMIN2/SIP1, DDX20/GEMIN3, GEMIN4, GEMIN5, GEMIN6, GEMIN7, GEMIN8 and STRAP/UNRIP. Part of the SMN-Sm complex that contains SMN1, GEMIN2/SIP1, DDX20/GEMIN3, GEMIN4, GEMIN5, GEMIN6, GEMIN7, GEMIN8, STRAP/UNRIP and the Sm proteins SNRPB, SNRPD1, SNRPD2, SNRPD3, SNRPE, SNRPF and SNRPG. Interacts with SMN1; the interaction is direct. Interacts with GEMIN4; the interaction is direct. Interacts with GEMIN5. Interacts with SNUPN; the interaction is direct. Interacts with PPP4R2. Interacts with FOXL2. Interacts with NANOS1 and PUM2.

The protein resides in the cytoplasm. The protein localises to the nucleus. Its subcellular location is the gem. The enzyme catalyses ATP + H2O = ADP + phosphate + H(+). The catalysed reaction is a ribonucleoside 5'-triphosphate + H2O = a ribonucleoside 5'-diphosphate + phosphate + H(+). Functionally, the SMN complex catalyzes the assembly of small nuclear ribonucleoproteins (snRNPs), the building blocks of the spliceosome, and thereby plays an important role in the splicing of cellular pre-mRNAs. Most spliceosomal snRNPs contain a common set of Sm proteins SNRPB, SNRPD1, SNRPD2, SNRPD3, SNRPE, SNRPF and SNRPG that assemble in a heptameric protein ring on the Sm site of the small nuclear RNA to form the core snRNP (Sm core). In the cytosol, the Sm proteins SNRPD1, SNRPD2, SNRPE, SNRPF and SNRPG are trapped in an inactive 6S pICln-Sm complex by the chaperone CLNS1A that controls the assembly of the core snRNP. To assemble core snRNPs, the SMN complex accepts the trapped 5Sm proteins from CLNS1A forming an intermediate. Binding of snRNA inside 5Sm triggers eviction of the SMN complex, thereby allowing binding of SNRPD3 and SNRPB to complete assembly of the core snRNP. May also play a role in the metabolism of small nucleolar ribonucleoprotein (snoRNPs). In Mus musculus (Mouse), this protein is Probable ATP-dependent RNA helicase DDX20 (Ddx20).